An 89-amino-acid chain; its full sequence is MTTIRGDDLSNQITQISGSSSKKEEEKKKQQMLTGVLGLQPTMANHPVLGVFLPKYAKQNGGNVDKTAFRLDLIRMLALHRLNTKTGSD.

A disordered region spans residues 1-31 (MTTIRGDDLSNQITQISGSSSKKEEEKKKQQ). Positions 9–18 (LSNQITQISG) are enriched in polar residues.

The protein belongs to the herpesviridae small capsomere-interacting protein family. Interacts with the major capsid protein/MCP.

Its subcellular location is the virion. It is found in the host nucleus. Functionally, participates in the assembly of the infectious particles by decorating the outer surface of the capsid shell and thus forming a layer between the capsid and the tegument. Complexes composed of the major capsid protein and small capsomere-interacting protein/SCP assemble together in the host cytoplasm and are translocated to the nucleus, where they accumulate and participate in capsid assembly. The protein is Small capsomere-interacting protein of Human herpesvirus 6B (HHV-6 variant B).